Consider the following 285-residue polypeptide: Alpha-acetolactate decarboxylase (285 aa).

Residues 1–25 form the signal peptide; the sequence is MKKNIITSITSLALVAGLSLTAFAA.

It belongs to the alpha-acetolactate decarboxylase family.

The catalysed reaction is (2S)-2-acetolactate + H(+) = (R)-acetoin + CO2. Its pathway is polyol metabolism; (R,R)-butane-2,3-diol biosynthesis; (R,R)-butane-2,3-diol from pyruvate: step 2/3. Converts acetolactate into acetoin, which can be excreted by the cells. This may be a mechanism for controlling the internal pH of cells in the stationary stage. The sequence is that of Alpha-acetolactate decarboxylase (aldB) from Brevibacillus brevis (Bacillus brevis).